Consider the following 543-residue polypeptide: Allantoate permease (543 aa).

Residues Met1–Lys80 lie on the Cytoplasmic side of the membrane. Residues Ile81 to Phe97 form a helical membrane-spanning segment. At Met98–Ser123 the chain is on the extracellular side. A helical transmembrane segment spans residues Trp124–Phe145. The Cytoplasmic segment spans residues Gln146 to Met154. The chain crosses the membrane as a helical span at residues Leu155 to Ala171. The Extracellular segment spans residues Pro172–Ser178. The chain crosses the membrane as a helical span at residues Phe179–Ile200. Residues Thr201–Arg213 are Cytoplasmic-facing. A helical transmembrane segment spans residues Val214–Ile237. The Extracellular portion of the chain corresponds to His238 to Arg248. Residues Thr249–Ile269 form a helical membrane-spanning segment. Residues Pro270–Thr317 lie on the Cytoplasmic side of the membrane. Residues Trp318–Leu342 form a helical membrane-spanning segment. Residues Asn343–Glu352 lie on the Extracellular side of the membrane. A helical membrane pass occupies residues Thr353–Tyr377. Over Ala378–Lys389 the chain is Cytoplasmic. The chain crosses the membrane as a helical span at residues Leu390–Thr411. The Extracellular segment spans residues Asn412 to Arg417. Residues Leu418–Leu435 form a helical membrane-spanning segment. Topologically, residues Ser436–Ser453 are cytoplasmic. Residues Ile454–Ala472 form a helical membrane-spanning segment. At Lys473 to Lys482 the chain is on the extracellular side. A helical transmembrane segment spans residues Val483–Leu504. Topologically, residues Arg505 to Leu543 are cytoplasmic.

The protein belongs to the major facilitator superfamily. Allantoate permease family.

It localises to the membrane. Functionally, component of the allantoate transport system. This Saccharomyces cerevisiae (strain ATCC 204508 / S288c) (Baker's yeast) protein is Allantoate permease (DAL5).